Reading from the N-terminus, the 392-residue chain is NAD(P)H-quinone oxidoreductase subunit H (392 aa).

Belongs to the complex I 49 kDa subunit family. As to quaternary structure, NDH-1 can be composed of about 15 different subunits; different subcomplexes with different compositions have been identified which probably have different functions.

The protein localises to the cellular thylakoid membrane. It carries out the reaction a plastoquinone + NADH + (n+1) H(+)(in) = a plastoquinol + NAD(+) + n H(+)(out). The catalysed reaction is a plastoquinone + NADPH + (n+1) H(+)(in) = a plastoquinol + NADP(+) + n H(+)(out). NDH-1 shuttles electrons from an unknown electron donor, via FMN and iron-sulfur (Fe-S) centers, to quinones in the respiratory and/or the photosynthetic chain. The immediate electron acceptor for the enzyme in this species is believed to be plastoquinone. Couples the redox reaction to proton translocation, and thus conserves the redox energy in a proton gradient. Cyanobacterial NDH-1 also plays a role in inorganic carbon-concentration. This Synechococcus sp. (strain JA-2-3B'a(2-13)) (Cyanobacteria bacterium Yellowstone B-Prime) protein is NAD(P)H-quinone oxidoreductase subunit H.